Here is a 624-residue protein sequence, read N- to C-terminus: 1-deoxy-D-xylulose-5-phosphate synthase (624 aa).

Thiamine diphosphate is bound by residues His80 and 121-123 (GHS). Residue Asp152 participates in Mg(2+) binding. Thiamine diphosphate contacts are provided by residues 153–154 (GA), Asn181, Tyr288, and Glu370. Asn181 serves as a coordination point for Mg(2+).

It belongs to the transketolase family. DXPS subfamily. In terms of assembly, homodimer. Requires Mg(2+) as cofactor. It depends on thiamine diphosphate as a cofactor.

It catalyses the reaction D-glyceraldehyde 3-phosphate + pyruvate + H(+) = 1-deoxy-D-xylulose 5-phosphate + CO2. It participates in metabolic intermediate biosynthesis; 1-deoxy-D-xylulose 5-phosphate biosynthesis; 1-deoxy-D-xylulose 5-phosphate from D-glyceraldehyde 3-phosphate and pyruvate: step 1/1. In terms of biological role, catalyzes the acyloin condensation reaction between C atoms 2 and 3 of pyruvate and glyceraldehyde 3-phosphate to yield 1-deoxy-D-xylulose-5-phosphate (DXP). In Proteus mirabilis (strain HI4320), this protein is 1-deoxy-D-xylulose-5-phosphate synthase.